We begin with the raw amino-acid sequence, 157 residues long: Myosin essential light chain, striated adductor muscle (157 aa).

EF-hand domains follow at residues 7–44 and 82–117; these read DEIDDLKDVFELFDFWDGRDGAVDAFKLGDVCRCLGIN and GTFADYMEAFKTFDREGQGFISGAELRHVLTALGER.

In molluscan muscle, calcium regulation is associated with myosin rather than with actin. Muscle myosin contains two types of light chains: the catalytic light chain, essential for ATPase activity, and the regulatory light chain, a calcium-binding protein responsible for Ca(2+) dependent binding and Ca(2+) dependent Mg-ATPase activity. The sequence is that of Myosin essential light chain, striated adductor muscle from Argopecten irradians (Bay scallop).